The sequence spans 552 residues: MEKVQQTIRAPRGTELQTKGWVQEAALRMLMNNLDPEVAEKPEELVVYGGIGRAARNWESYQAIVDSLKTLESDETLLVQSGKPVAIFKSHEDAPRVLLANSNLVPKWANWDHFRELEKKGLMMYGQMTAGSWIYIGTQGILQGTYETFGEAARQHFGGSLKGTLTLTAGLGGMGGAQPLAVTMNGGVVIAIDVDKRSIDRRIEKRYCDMYTESLEEALAVANEYKEKKEPISIGLLGNAAEILPELVKRNITPDLVTDQTSAHDPLNGYIPVGYTLEEAAKLREEDPERYVQLSKESMTKHVEAMLAMQEKGAITFDYGNNIRQVAFDEGLKNAFDFPGFVPAFIRPLFCEGKGPFRWVALSGDPEDIYKTDEVILREFADNEHLCNWIRMARQQVEFQGLPSRICWLGYGERAKFGRIINEMVANGELSAPIVIGRDHLDCGSVASPNRETEAMKDGSDAVADWPILNALINSVNGASWVSVHHGGGVGMGYSLHAGMVIVADGTEAAAKRIERVLTSDPGMGVVRHVDAGYDLAVKTAKEKGVNIPMMK.

Residues 49–50 (GG), Q127, 173–175 (GMG), D193, 239–240 (NA), 260–264 (QTSAH), 270–271 (YI), and Y319 each bind NAD(+). C407 is a catalytic residue. Residue G489 participates in NAD(+) binding.

This sequence belongs to the urocanase family. Requires NAD(+) as cofactor.

The protein localises to the cytoplasm. The enzyme catalyses 4-imidazolone-5-propanoate = trans-urocanate + H2O. The protein operates within amino-acid degradation; L-histidine degradation into L-glutamate; N-formimidoyl-L-glutamate from L-histidine: step 2/3. Functionally, catalyzes the conversion of urocanate to 4-imidazolone-5-propionate. This chain is Urocanate hydratase, found in Bacillus cereus (strain 03BB102).